We begin with the raw amino-acid sequence, 826 residues long: Villin-1 (826 aa).

Residues 1 to 734 form a core region; it reads MVELSKKVTG…YDELKAELGD (734 aa). One copy of the Gelsolin-like 1 repeat lies at 27-76; that stretch reads MEMVPVPTKSYGNFYEGDCYVLLSTRKTGSGFSYNIHYWLGKNSSQDEQG. A 1,2-diacyl-sn-glycero-3-phospho-(1D-myo-inositol-4,5-bisphosphate) is bound at residue 112–119; sequence KQGLIYKQ. The segment at 129–137 is crucial for binding an actin filament; it reads VETNTYNVQ. 138-146 contacts a 1,2-diacyl-sn-glycero-3-phospho-(1D-myo-inositol-4,5-bisphosphate); the sequence is RLLHVKGKK. 5 Gelsolin-like repeats span residues 148 to 188, 265 to 309, 408 to 457, 528 to 568, and 631 to 672; these read VVAA…AERL, LVIQ…EEKQ, QELV…DELA, TKAF…DERE, and FLAT…SEKE. Residues 735-826 are headpiece; sequence NASIGQLVSG…QNLKKEKGLF (92 aa). The region spanning 760–826 is the HP domain; it reads PTKLETFPLD…QNLKKEKGLF (67 aa). The tract at residues 820–823 is absolutely required for activity; it reads KKEK.

The protein belongs to the villin/gelsolin family. In terms of assembly, monomer. Homodimer. Associates with F-actin; the association with F-actin is inhibited by tropomyosin. In terms of processing, phosphorylated on tyrosine residues. The unphosphorylated form increases the initial rate of actin-nucleating activity, whereas the tyrosine-phosphorylated form inhibits actin-nucleating activity, enhances actin-bundling activity and enhances actin-severing activity by reducing high Ca(2+) requirements. The tyrosine-phosphorylated form does not regulate actin-capping activity. Tyrosine phosphorylation is essential for cell migration: tyrosine phosphorylation sites in the N-terminus half regulate actin reorganization and cell morphology, whereas tyrosine phosphorylation sites in the C-terminus half regulate cell migration. Tyrosine phosphorylation is induced by epidermal growth factor (EGF) and stimulates cell migration. In terms of tissue distribution, specifically expressed in epithelial cells. Component of brush border microvilli.

The protein resides in the cytoplasm. The protein localises to the cytoskeleton. Its subcellular location is the cell projection. It is found in the microvillus. It localises to the lamellipodium. The protein resides in the ruffle. The protein localises to the filopodium tip. Its subcellular location is the filopodium. Functionally, epithelial cell-specific Ca(2+)-regulated actin-modifying protein that modulates the reorganization of microvillar actin filaments. Plays a role in the actin nucleation, actin filament bundle assembly, actin filament capping and severing. Binds phosphatidylinositol 4,5-bisphosphate (PIP2) and lysophosphatidic acid (LPA); binds LPA with higher affinity than PIP2. Binding to LPA increases its phosphorylation by SRC and inhibits all actin-modifying activities. Binding to PIP2 inhibits actin-capping and -severing activities but enhances actin-bundling activity. Regulates the intestinal epithelial cell morphology, cell invasion, cell migration and apoptosis. Protects against apoptosis induced by dextran sodium sulfate (DSS) in the gastrointestinal epithelium. Appears to regulate cell death by maintaining mitochondrial integrity. Enhances hepatocyte growth factor (HGF)-induced epithelial cell motility, chemotaxis and wound repair. Its actin-bundling activity is inhibited by tropomyosin. This chain is Villin-1 (VIL1), found in Gallus gallus (Chicken).